A 444-amino-acid polypeptide reads, in one-letter code: UDP-N-acetylmuramoylalanine--D-glutamate ligase (444 aa).

113–119 provides a ligand contact to ATP; the sequence is GSNGKST.

Belongs to the MurCDEF family.

The protein localises to the cytoplasm. It carries out the reaction UDP-N-acetyl-alpha-D-muramoyl-L-alanine + D-glutamate + ATP = UDP-N-acetyl-alpha-D-muramoyl-L-alanyl-D-glutamate + ADP + phosphate + H(+). It functions in the pathway cell wall biogenesis; peptidoglycan biosynthesis. Its function is as follows. Cell wall formation. Catalyzes the addition of glutamate to the nucleotide precursor UDP-N-acetylmuramoyl-L-alanine (UMA). This chain is UDP-N-acetylmuramoylalanine--D-glutamate ligase, found in Blochmanniella floridana.